A 446-amino-acid polypeptide reads, in one-letter code: Nuclear envelope morphology protein 1 (446 aa).

The interval 53–80 is disordered; that stretch reads VDQQYDHSSSHLKESDQNQERKNSVPKK. The span at 56 to 75 shows a compositional bias: basic and acidic residues; sequence QYDHSSSHLKESDQNQERKN. A helical membrane pass occupies residues 87 to 103; it reads ILIEKIASILWALLLFL. Positions 132 to 168 are disordered; the sequence is HTDKRNRGSNASENELPVSSSNINDSSEKTNPKNCNL. Polar residues predominate over residues 139–156; the sequence is GSNASENELPVSSSNIND. Residues 247–424 enclose the FCP1 homology domain; it reads NTQKKKKLVI…LNLLPFLEAM (178 aa).

Belongs to the Dullard family. In terms of assembly, component of the NEM1-SPO7 complex.

It localises to the endoplasmic reticulum membrane. The protein resides in the nucleus membrane. It catalyses the reaction O-phospho-L-seryl-[protein] + H2O = L-seryl-[protein] + phosphate. The enzyme catalyses O-phospho-L-threonyl-[protein] + H2O = L-threonyl-[protein] + phosphate. Its function is as follows. Catalytic component of the NEM1-SPO7 complex which acts as a phosphatase and dephosphorylates the phosphatidic acid phosphohydrolase PAH1. Essential for the formation of a spherical nucleus and meiotic division. The NEM1-SPOo7 protein phosphatase is required for efficient mitophagy under prolonged respiration, as well as for reticulophagy and pexophagy. The sequence is that of Nuclear envelope morphology protein 1 (NEM1) from Saccharomyces cerevisiae (strain ATCC 204508 / S288c) (Baker's yeast).